The sequence spans 921 residues: GPI ethanolamine phosphate transferase 1 (921 aa).

The helical transmembrane segment at 37 to 57 (PGHVALIAGLYEDVSAVTTGW) threads the bilayer. 2 N-linked (GlcNAc...) asparagine glycosylation sites follow: asparagine 69 and asparagine 132. Helical transmembrane passes span 386 to 406 (ALIT…VIDL), 418 to 438 (TLIG…SFAI), 441 to 461 (SPLT…EVYA), 483 to 503 (FVSL…LALG), 509 to 529 (ILTI…FSFL), 533 to 553 (MALS…TLLP), 561 to 581 (VNMI…YLIL), 606 to 626 (LVGI…SSAL), 640 to 660 (VMGW…RAKP), and 679 to 699 (FVIL…AVLV). A disordered region spans residues 715–737 (SANGAARSAPSPAKPHNLETSQT). A run of 4 helical transmembrane segments spans residues 752 to 772 (VALF…NVAS), 795 to 815 (AMLI…LGIL), 825 to 845 (ALFM…FWVV), and 862 to 882 (VIAS…AMFI).

It belongs to the PIGG/PIGN/PIGO family. PIGN subfamily.

The protein resides in the endoplasmic reticulum membrane. Its pathway is glycolipid biosynthesis; glycosylphosphatidylinositol-anchor biosynthesis. Ethanolamine phosphate transferase involved in glycosylphosphatidylinositol-anchor biosynthesis. Transfers ethanolamine phosphate to the first alpha-1,4-linked mannose of the glycosylphosphatidylinositol precursor of GPI-anchor. The protein is GPI ethanolamine phosphate transferase 1 (MCD4) of Chaetomium globosum (strain ATCC 6205 / CBS 148.51 / DSM 1962 / NBRC 6347 / NRRL 1970) (Soil fungus).